The chain runs to 367 residues: MEANGLGPQGFPELKNDTFLRAAWGEETDYTPVWCMRQAGRYLPEFRETRAAQDFFSTCRSPEACCELTLQPLRRFPLDAAIIFSDILVVPQALGMEVTMVPGKGPSFPEPLREEQDLERLRDPEVVASELGYVFQAITLTRQRLAGRVPLIGFAGAPWTLMTYMVEGGGSSTMAQAKRWLYQRPQASHQLLRILTDALVPYLVGQVVAGAQALQLFESHAGHLGPQLFNKFALPYIRDVAKQVKARLREAGLAPVPMIIFAKDGHFALEELAQAGYEVVGLDWTVAPKKARECVGKTVTLQGNLDPCALYASEEEIGQLVKQMLDDFGPHRYIANLGHGLYPDMDPEHVGAFVDAVHKHSRLLRQN.

The residue at position 1 (Met1) is an N-acetylmethionine. Coproporphyrinogen I is bound by residues Arg37, Ala39, Arg41, Arg50, Asp86, Tyr164, Ser219, and His339. Residues Arg37, Ala39, and Arg41 each contribute to the coproporphyrinogen III site. The coproporphyrinogen III site is built by Asp86, Tyr164, Ser219, and His339.

It belongs to the uroporphyrinogen decarboxylase family. In terms of assembly, homodimer.

The protein localises to the cytoplasm. It is found in the cytosol. The enzyme catalyses uroporphyrinogen III + 4 H(+) = coproporphyrinogen III + 4 CO2. The catalysed reaction is uroporphyrinogen I + 4 H(+) = coproporphyrinogen I + 4 CO2. The protein operates within porphyrin-containing compound metabolism; protoporphyrin-IX biosynthesis; coproporphyrinogen-III from 5-aminolevulinate: step 4/4. In terms of biological role, catalyzes the sequential decarboxylation of the four acetate side chains of uroporphyrinogen to form coproporphyrinogen and participates in the fifth step in the heme biosynthetic pathway. Isomer I or isomer III of uroporphyrinogen may serve as substrate, but only coproporphyrinogen III can ultimately be converted to heme. In vitro also decarboxylates pentacarboxylate porphyrinogen I. The chain is Uroporphyrinogen decarboxylase from Homo sapiens (Human).